We begin with the raw amino-acid sequence, 131 residues long: MSWQTYVDDHLMCDIEGNHLSSAAILGHDGTVWAQSPSFPQLKPEEVSAIMKDFNEPGSLAPTGLHLGGTKYMVIQGEPGDVIRGKKGPGGVTIKKTNQALIIGIYGEPMTPGQCNMVVERIGDYLVEQGM.

Belongs to the profilin family. Occurs in many kinds of cells as a complex with monomeric actin in a 1:1 ratio.

It localises to the cytoplasm. The protein resides in the cytoskeleton. Its function is as follows. Binds to actin and affects the structure of the cytoskeleton. At high concentrations, profilin prevents the polymerization of actin, whereas it enhances it at low concentrations. By binding to PIP2, it inhibits the formation of IP3 and DG. The protein is Profilin of Chenopodium album (Fat hen).